We begin with the raw amino-acid sequence, 298 residues long: Probable mitochondrial 2-oxodicarboxylate carrier (298 aa).

A run of 6 helical transmembrane segments spans residues 6–26, 62–81, 105–125, 159–179, 203–223, and 267–287; these read IPFPVTFAAGAVAGISEVLTL, HRLYRGILPPILMEAPKRAL, ALSILTGSCAGFTETFVVVPF, ALYNGFEATMWRHVVWNAGYF, LIAGTIGGIFGTFLSTPFDVI, and VLRLGPGGGILLVVFNSVIEF. 3 Solcar repeats span residues 6–92, 102–188, and 197–287; these read IPFP…YSKL, SSPA…IRNS, and GEIR…VIEF.

It belongs to the mitochondrial carrier (TC 2.A.29) family.

It localises to the mitochondrion inner membrane. Functionally, transports C5-C7 oxodicarboxylates across the inner membranes of mitochondria. The chain is Probable mitochondrial 2-oxodicarboxylate carrier from Schizosaccharomyces pombe (strain 972 / ATCC 24843) (Fission yeast).